The sequence spans 396 residues: Tryptophan synthase beta chain (396 aa).

N6-(pyridoxal phosphate)lysine is present on Lys88.

Belongs to the TrpB family. In terms of assembly, tetramer of two alpha and two beta chains. Requires pyridoxal 5'-phosphate as cofactor.

It catalyses the reaction (1S,2R)-1-C-(indol-3-yl)glycerol 3-phosphate + L-serine = D-glyceraldehyde 3-phosphate + L-tryptophan + H2O. It participates in amino-acid biosynthesis; L-tryptophan biosynthesis; L-tryptophan from chorismate: step 5/5. In terms of biological role, the beta subunit is responsible for the synthesis of L-tryptophan from indole and L-serine. This chain is Tryptophan synthase beta chain, found in Actinobacillus pleuropneumoniae serotype 3 (strain JL03).